The primary structure comprises 177 residues: Thymidine kinase (177 aa).

11 to 18 (GPMFSGKS) is a binding site for ATP. The active-site Proton acceptor is E83. F113 serves as a coordination point for substrate. Zn(2+) is bound by residues C138 and C141. Residue 157 to 161 (IEIIG) coordinates substrate. Zn(2+)-binding residues include C170 and C173.

Belongs to the thymidine kinase family. In terms of assembly, homotetramer. Two molecules of substrate bind to each enzyme tetramer.

It carries out the reaction thymidine + ATP = dTMP + ADP + H(+). Its function is as follows. Phosphorylates thymidine and thymidine analogs, such as azidothymidine (AZT). Part of the salvage pathway for pyrimidine deoxyribonucleotide synthesis. This Vaccinia virus (strain Copenhagen) (VACV) protein is Thymidine kinase (OPG101).